Reading from the N-terminus, the 326-residue chain is Vitamin B12 import system permease protein BtuC (326 aa).

The next 9 helical transmembrane spans lie at 15-35 (WLLC…CAGE), 61-81 (LAVL…QALF), 88-108 (PGLL…VLLG), 112-132 (LPNW…TLIL), 146-166 (LLAG…AIYF), 184-204 (GGVD…LLWI), 240-260 (GWMV…GLVI), 274-294 (VLLP…DIVA), and 302-322 (ELPI…WLLL).

Belongs to the binding-protein-dependent transport system permease family. FecCD subfamily. The complex is composed of two ATP-binding proteins (BtuD), two transmembrane proteins (BtuC) and a solute-binding protein (BtuF).

It is found in the cell inner membrane. Functionally, part of the ABC transporter complex BtuCDF involved in vitamin B12 import. Involved in the translocation of the substrate across the membrane. In Shigella boydii serotype 18 (strain CDC 3083-94 / BS512), this protein is Vitamin B12 import system permease protein BtuC.